A 370-amino-acid chain; its full sequence is UDP-3-O-acylglucosamine N-acyltransferase (370 aa).

His-252 functions as the Proton acceptor in the catalytic mechanism. The tract at residues 350–370 (AAGRQDGPAANAASSSAGDKA) is disordered. Residues 358-370 (AANAASSSAGDKA) are compositionally biased toward low complexity.

This sequence belongs to the transferase hexapeptide repeat family. LpxD subfamily. Homotrimer.

It carries out the reaction a UDP-3-O-[(3R)-3-hydroxyacyl]-alpha-D-glucosamine + a (3R)-hydroxyacyl-[ACP] = a UDP-2-N,3-O-bis[(3R)-3-hydroxyacyl]-alpha-D-glucosamine + holo-[ACP] + H(+). The protein operates within bacterial outer membrane biogenesis; LPS lipid A biosynthesis. In terms of biological role, catalyzes the N-acylation of UDP-3-O-acylglucosamine using 3-hydroxyacyl-ACP as the acyl donor. Is involved in the biosynthesis of lipid A, a phosphorylated glycolipid that anchors the lipopolysaccharide to the outer membrane of the cell. The sequence is that of UDP-3-O-acylglucosamine N-acyltransferase from Paraburkholderia xenovorans (strain LB400).